The chain runs to 660 residues: Bifunctional polymyxin resistance protein ArnA (660 aa).

Residues 1–304 (MKTVVFAYHD…TLGLVQGSRL (304 aa)) form a formyltransferase ArnAFT region. (6R)-10-formyltetrahydrofolate is bound at residue 86 to 88 (HLI). The active-site Proton donor; for formyltransferase activity is His104. (6R)-10-formyltetrahydrofolate is bound by residues Arg114 and 136 to 140 (VKRAD). The dehydrogenase ArnADH stretch occupies residues 314 to 660 (RRTRVLILGV…RTVDLTDKPS (347 aa)). NAD(+) contacts are provided by residues Asp347 and 368-369 (DI). UDP-alpha-D-glucuronate contacts are provided by residues Ala393, Tyr398, and 432-433 (TS). Glu434 serves as the catalytic Proton acceptor; for decarboxylase activity. UDP-alpha-D-glucuronate is bound by residues Arg460, Asn492, 526–535 (KLIDGGKQKR), and Tyr613. Arg619 serves as the catalytic Proton donor; for decarboxylase activity.

This sequence in the N-terminal section; belongs to the Fmt family. UDP-L-Ara4N formyltransferase subfamily. In the C-terminal section; belongs to the NAD(P)-dependent epimerase/dehydratase family. UDP-glucuronic acid decarboxylase subfamily. As to quaternary structure, homohexamer, formed by a dimer of trimers.

It carries out the reaction UDP-alpha-D-glucuronate + NAD(+) = UDP-beta-L-threo-pentopyranos-4-ulose + CO2 + NADH. The catalysed reaction is UDP-4-amino-4-deoxy-beta-L-arabinose + (6R)-10-formyltetrahydrofolate = UDP-4-deoxy-4-formamido-beta-L-arabinose + (6S)-5,6,7,8-tetrahydrofolate + H(+). It participates in nucleotide-sugar biosynthesis; UDP-4-deoxy-4-formamido-beta-L-arabinose biosynthesis; UDP-4-deoxy-4-formamido-beta-L-arabinose from UDP-alpha-D-glucuronate: step 1/3. It functions in the pathway nucleotide-sugar biosynthesis; UDP-4-deoxy-4-formamido-beta-L-arabinose biosynthesis; UDP-4-deoxy-4-formamido-beta-L-arabinose from UDP-alpha-D-glucuronate: step 3/3. The protein operates within bacterial outer membrane biogenesis; lipopolysaccharide biosynthesis. Bifunctional enzyme that catalyzes the oxidative decarboxylation of UDP-glucuronic acid (UDP-GlcUA) to UDP-4-keto-arabinose (UDP-Ara4O) and the addition of a formyl group to UDP-4-amino-4-deoxy-L-arabinose (UDP-L-Ara4N) to form UDP-L-4-formamido-arabinose (UDP-L-Ara4FN). The modified arabinose is attached to lipid A and is required for resistance to polymyxin and cationic antimicrobial peptides. This is Bifunctional polymyxin resistance protein ArnA from Escherichia coli O17:K52:H18 (strain UMN026 / ExPEC).